Reading from the N-terminus, the 149-residue chain is Arginine repressor (149 aa).

This sequence belongs to the ArgR family.

The protein resides in the cytoplasm. It functions in the pathway amino-acid biosynthesis; L-arginine biosynthesis [regulation]. Functionally, regulates arginine biosynthesis genes. In Oceanobacillus iheyensis (strain DSM 14371 / CIP 107618 / JCM 11309 / KCTC 3954 / HTE831), this protein is Arginine repressor.